Reading from the N-terminus, the 898-residue chain is Serine/threonine-protein kinase TAO3 (898 aa).

The Protein kinase domain occupies 24 to 277 (FIDLHEIGHG…AAELLRHDFI (254 aa)). ATP contacts are provided by residues 30–38 (IGHGSFGAV) and Lys53. Catalysis depends on Asp147, which acts as the Proton acceptor. 2 disordered regions span residues 316-372 (TRNG…EVMD) and 405-424 (DEAG…SVQS). Residues Ser324, Ser331, Ser343, Ser346, and Ser349 each carry the phosphoserine modification. The span at 349 to 366 (SIPSVSVSTGSRSSSVNS) shows a compositional bias: low complexity. Thr357 carries the phosphothreonine modification. A Phosphoserine modification is found at Ser359. Over residues 405–416 (DEAGHGDPRPEP) the composition is skewed to basic and acidic residues. Ser442 is subject to Phosphoserine. Coiled-coil stretches lie at residues 452–502 (EQEN…THAN), 548–649 (FLES…HAML), and 753–871 (ILKT…QERE). The segment at 565-596 (EEMNEDHSTPKKEKQERISKHKENLQHTQAEE) is disordered. Position 830 is an N6-acetyllysine (Lys830).

Belongs to the protein kinase superfamily. STE Ser/Thr protein kinase family. STE20 subfamily. Self-associates. Interacts with ERN1 and TRAF2. Interaction with TRAF2 is facilitated under ER stress conditions, such as treatment with tunicamycin, and may promote TRAF2 phosphorylation. Interacts (via N-terminus) with STK25; the interaction promotes STK25 abundance at the level of protein expression and/or stability. Autophosphorylated. Phosphorylation at Ser-324 by ATM following DNA damage is required for activation of the p38/MAPK14 stress-activated MAPK cascade. Phosphorylated at Ser-324 and on Tyr residues during T cell activation. Phosphorylated by LRRK2. As to expression, ubiquitously expressed, with a higher expression in the retina.

The protein localises to the cytoplasm. Its subcellular location is the cell membrane. It is found in the membrane raft. The protein resides in the lipid droplet. The catalysed reaction is L-seryl-[protein] + ATP = O-phospho-L-seryl-[protein] + ADP + H(+). It catalyses the reaction L-threonyl-[protein] + ATP = O-phospho-L-threonyl-[protein] + ADP + H(+). In terms of biological role, serine/threonine-protein kinase that acts as a regulator of the p38/MAPK14 stress-activated MAPK cascade and of the MAPK8/JNK cascade. In response to DNA damage, involved in the G2/M transition DNA damage checkpoint by activating the p38/MAPK14 stress-activated MAPK cascade, probably by mediating phosphorylation of upstream MAP2K3 and MAP2K6 kinases. Inhibits basal activity of the MAPK8/JNK cascade and diminishes its activation in response to epidermal growth factor (EGF). Positively regulates canonical T cell receptor (TCR) signaling by preventing early PTPN6/SHP1-mediated inactivation of LCK, ensuring sustained TCR signaling that is required for optimal activation and differentiation of T cells. Phosphorylates PTPN6/SHP1 on 'Thr-396', leading to its polyubiquitination and subsequent proteasomal degradation. Required for cell surface expression of metalloprotease ADAM10 on type 1 transitional B cells which is necessary for their NOTCH-mediated development into marginal zone B cells. Also required for the NOTCH-mediated terminal differentiation of splenic conventional type 2 dendritic cells. Positively regulates osteoblast differentiation by acting as an upstream activator of the JNK pathway. Promotes JNK signaling in hepatocytes and positively regulates hepatocyte lipid storage by inhibiting beta-oxidation and triacylglycerol secretion while enhancing lipid synthesis. Restricts age-associated inflammation by negatively regulating differentiation of macrophages and their production of pro-inflammatory cytokines. Plays a role in negatively regulating the abundance of regulatory T cells in white adipose tissue. The protein is Serine/threonine-protein kinase TAO3 (Taok3) of Rattus norvegicus (Rat).